A 199-amino-acid polypeptide reads, in one-letter code: Recombination protein RecR (199 aa).

Residues 58-73 (CRTCFSLSDQPECRIC) form a C4-type zinc finger. The region spanning 81–176 (SIICVVEKPT…NVTRIASGVP (96 aa)) is the Toprim domain.

This sequence belongs to the RecR family.

Its function is as follows. May play a role in DNA repair. It seems to be involved in an RecBC-independent recombinational process of DNA repair. It may act with RecF and RecO. This chain is Recombination protein RecR, found in Desulforapulum autotrophicum (strain ATCC 43914 / DSM 3382 / VKM B-1955 / HRM2) (Desulfobacterium autotrophicum).